A 625-amino-acid chain; its full sequence is PTS system beta-glucoside-specific EIIBCA component (625 aa).

In terms of domain architecture, PTS EIIB type-1 spans 1–84 (MTELARKIVA…NSVAGLDEKA (84 aa)). Topologically, residues 1–99 (MTELARKIVA…NDDKGNLLNR (99 aa)) are periplasmic. Catalysis depends on C24, which acts as the Phosphocysteine intermediate; for EIIB activity. The helical transmembrane segment at 100–120 (FVYVISGIFTPLIGLMAATGI) threads the bilayer. A PTS EIIC type-1 domain is found at 102-465 (YVISGIFTPL…RQPAQGAPQE (364 aa)). Topologically, residues 121–140 (LKGMLALALTFQWTTEQSGT) are cytoplasmic. The chain crosses the membrane as a helical span at residues 141–161 (YLILFSASDALFWFFPIILGY). The Periplasmic portion of the chain corresponds to 162-166 (TAGKR). Residues 167–187 (FGGNPFTAMVIGGALVHPLIL) traverse the membrane as a helical segment. Topologically, residues 188–202 (TAFENGQKADALGLD) are cytoplasmic. The chain crosses the membrane as a helical span at residues 203–223 (FLGIPVTLLNYSSSVIPIIFS). Over 224–244 (AWLCSILERRLNAWLPSAIKN) the chain is Periplasmic. The chain crosses the membrane as a helical span at residues 245-265 (FFTPLLCLMVITPVTFLLVGP). Topologically, residues 266–284 (LSTWISELIAAGYLWLYQA) are cytoplasmic. A helical membrane pass occupies residues 285–305 (VPAFAGAVMGGFWQIFVMFGL). At 306–324 (HWGLVPLCINNFTVLGYDT) the chain is on the periplasmic side. The helical transmembrane segment at 325 to 345 (MIPLLMPAIMAQVGAALGVFL) threads the bilayer. Residues 346–353 (CERDAQKK) lie on the Cytoplasmic side of the membrane. A helical transmembrane segment spans residues 354–374 (VVAGSAALTSLFGITEPAVYG). Over 375-380 (VNLPRK) the chain is Periplasmic. Residues 381–401 (YPFVIACISGALGATIIGYAQ) traverse the membrane as a helical segment. The Cytoplasmic segment spans residues 402-403 (TK). A helical transmembrane segment spans residues 404 to 424 (VYSFGLPSIFTFMQTIPSTGI). Topologically, residues 425-431 (DFTVWAS) are periplasmic. The helical transmembrane segment at 432–452 (VIGGVIAIGCAFVGTVMLHFI) threads the bilayer. Residues 453-625 (TAKRQPAQGA…AGEPLLSIIR (173 aa)) are Cytoplasmic-facing. The PTS EIIA type-1 domain maps to 495–599 (DTTFASGLLG…DLTTPVLISN (105 aa)). H547 functions as the Tele-phosphohistidine intermediate; for EIIA activity in the catalytic mechanism.

It is found in the cell inner membrane. In terms of biological role, the phosphoenolpyruvate-dependent sugar phosphotransferase system (sugar PTS), a major carbohydrate active -transport system, catalyzes the phosphorylation of incoming sugar substrates concomitantly with their translocation across the cell membrane. This system is involved in beta-glucoside transport. Its function is as follows. Acts both as a kinase and as a phosphatase on BglG. This is PTS system beta-glucoside-specific EIIBCA component (bglF) from Escherichia coli (strain K12).